The primary structure comprises 202 residues: Ribonuclease HII (202 aa).

Residues 15-202 form the RNase H type-2 domain; that stretch reads QGVAGVDEAG…APIKAFGISA (188 aa). A divalent metal cation-binding residues include aspartate 21, glutamate 22, and aspartate 113.

The protein belongs to the RNase HII family. It depends on Mn(2+) as a cofactor. Mg(2+) is required as a cofactor.

It localises to the cytoplasm. It carries out the reaction Endonucleolytic cleavage to 5'-phosphomonoester.. In terms of biological role, endonuclease that specifically degrades the RNA of RNA-DNA hybrids. The sequence is that of Ribonuclease HII from Bordetella avium (strain 197N).